The following is a 247-amino-acid chain: ATP synthase subunit a, chloroplastic (247 aa).

The next 5 membrane-spanning stretches (helical) occupy residues 38 to 58, 95 to 115, 134 to 154, 199 to 219, and 220 to 240; these read QVLITSWVVITILLGSVVIAV, VPFIGTMFLFIFVSNWSGALL, INTTVALALLTSAAYFYAGLS, LVVVVLVSLVPLVIPIPVMFL, and GLFTSGIQALIFATLAAAYIG.

Belongs to the ATPase A chain family. F-type ATPases have 2 components, CF(1) - the catalytic core - and CF(0) - the membrane proton channel. CF(1) has five subunits: alpha(3), beta(3), gamma(1), delta(1), epsilon(1). CF(0) has four main subunits: a, b, b' and c.

It is found in the plastid. The protein resides in the chloroplast thylakoid membrane. Functionally, key component of the proton channel; it plays a direct role in the translocation of protons across the membrane. This Hordeum vulgare (Barley) protein is ATP synthase subunit a, chloroplastic.